Reading from the N-terminus, the 355-residue chain is Guanine nucleotide-binding protein G(z) subunit alpha (355 aa).

Over residues 1-14 (MGCRQSSEEKEAAR) the composition is skewed to basic and acidic residues. The tract at residues 1-26 (MGCRQSSEEKEAARRSRRIDRHLRSE) is disordered. The N-myristoyl glycine moiety is linked to residue Gly2. Cys3 carries S-palmitoyl cysteine lipidation. In terms of domain architecture, G-alpha spans 32-355 (REIKLLLLGT…QNNLKYIGLC (324 aa)). Positions 35-48 (KLLLLGTSNSGKST) are G1 motif. Residues 40 to 47 (GTSNSGKS), 176 to 182 (LRSRDMT), 201 to 205 (DVGGQ), 270 to 273 (NKKD), and Ala327 contribute to the GTP site. Residue Ser47 coordinates Mg(2+). The interval 174–182 (DILRSRDMT) is G2 motif. Arg179 is modified (ADP-ribosylarginine; by cholera toxin). Residue Thr182 participates in Mg(2+) binding. The G3 motif stretch occupies residues 197 to 206 (FKMVDVGGQR). The G4 motif stretch occupies residues 266–273 (ILFLNKKD). Residues 325–330 (TCATDT) form a G5 motif region.

This sequence belongs to the G-alpha family. G(i/o/t/z) subfamily. In terms of assembly, G-proteins are composed of 3 units; alpha, beta and gamma. The alpha chain contains the guanine nucleotide binding site. Interacts with ADGRB2.

It is found in the membrane. Guanine nucleotide-binding proteins (G proteins) are involved as modulators or transducers in various transmembrane signaling systems. The polypeptide is Guanine nucleotide-binding protein G(z) subunit alpha (GNAZ) (Homo sapiens (Human)).